We begin with the raw amino-acid sequence, 571 residues long: MKFMKLGSKPDTFESDGKFVKYAVSDLDSDVTIHVGEVTFHLHKFPLLSKSNRMQRLVFEASEEKTDEITILDMPGGYKAFEICAKFCYGMTVTLNAYNITAVRCAAEYLEMTEDADRGNLIYKIEVFLNSGIFRSWKDSIIVLQTTRSLLPWSEDLKLVGRCIDSVSAKILVNPETITWSYTFNRKLSGPDKIVEYHREKREENVIPKDWWVEDVCELEIDMFKRVISVVKSSGRMNNGVIAEALRYYVARWLPESMESLTSEASSNKDLVETVVFLLPKVNRAMSYSSCSFLLKLLKVSILVGADETVREDLVENVSLKLHEASVKDLLIHEVELVHRIVDQFMADEKRVSEDDRYKEFVLGNGILLSVGRLIDAYLALNSELTLSSFVELSELVPESARPIHDGLYKAIDTFMKEHPELTKSEKKRLCGLMDVRKLTNEASTHAAQNERLPLRVVVQVLYFEQLRANHSPVASVAASSHSPVEKTEENKGEEATKKVELSKKSRGSKSTRSGGGAQLMPSRSRRIFEKIWPGKGEISNKSSEVSSGSSQSPPAKSSSSSSRRRRHSIS.

Residues 29–97 (SDVTIHVGEV…CYGMTVTLNA (69 aa)) enclose the BTB domain. Residues 210–468 (DWWVEDVCEL…VQVLYFEQLR (259 aa)) enclose the NPH3 domain. Residue Tyr-409 is modified to Phosphotyrosine. The segment at 475–571 (ASVAASSHSP…SSRRRRHSIS (97 aa)) is disordered. The segment covering 484 to 504 (PVEKTEENKGEEATKKVELSK) has biased composition (basic and acidic residues). Low complexity predominate over residues 540–562 (SNKSSEVSSGSSQSPPAKSSSSS).

It belongs to the NPH3 family. In terms of assembly, component of a complex made of PINs (e.g. PIN1 and PIN2), MAB4/MELs (e.g. NPY1/MAB4 and NPY5/MEL1) and AGC kinases (e.g. D6PK and PID) at the plasma membrane. Binds directly to PIN2 and PID. In terms of tissue distribution, accumulates in organ primordia such as cotyledons, leaves and floral organs. Expressed mainly in the apical regions of embryos including cotyledon tips and the apical meristem. Induced by the transcription factor ARF5/MP at the periphery of inflorescence meristems. Highly expressed in primary root tips and radicles.

Its subcellular location is the late endosome. It is found in the cell membrane. The protein resides in the cytoplasm. It localises to the cytosol. It functions in the pathway protein modification; protein ubiquitination. In terms of biological role, may act as a substrate-specific adapter of an E3 ubiquitin-protein ligase complex (CUL3-RBX1-BTB) which mediates the ubiquitination and subsequent proteasomal degradation of target proteins. Coregulates with PID the auxin-mediated plant organogenesis. Regulates basipetal PIN proteins (e.g. PIN1) polarization to establish inward auxin transport from the L1 surface of incipient organ primordia; this process is essential for the progression of flower organs development. Recruited to the plasma membrane by PINs (e.g. PIN1 and PIN2) and, in concert with AGC kinases-mediated (e.g. D6PK and PID) PINs phosphorylation, maintains their cell polarity (apical or basal) through limiting lateral diffusion-based escape. Induces auxin response in inner cell layers through a shift in PIN1 localization. Influences cotyledon development by regulating auxin distribution mainly in the protodermal cell layer. May play an essential role in root gravitropic responses. The polypeptide is Phototropic-responsive NPH3 family protein NPY1 (Arabidopsis thaliana (Mouse-ear cress)).